A 161-amino-acid chain; its full sequence is Nucleotide-binding protein Shew_2893 (161 aa).

This sequence belongs to the YajQ family.

Functionally, nucleotide-binding protein. This chain is Nucleotide-binding protein Shew_2893, found in Shewanella loihica (strain ATCC BAA-1088 / PV-4).